The chain runs to 463 residues: Asparagine--tRNA ligase (463 aa).

It belongs to the class-II aminoacyl-tRNA synthetase family. In terms of assembly, homodimer.

It is found in the cytoplasm. The catalysed reaction is tRNA(Asn) + L-asparagine + ATP = L-asparaginyl-tRNA(Asn) + AMP + diphosphate + H(+). In Clostridium botulinum (strain Langeland / NCTC 10281 / Type F), this protein is Asparagine--tRNA ligase.